A 559-amino-acid chain; its full sequence is AP-4 complex accessory subunit tepsin (559 aa).

Positions 2 to 135 constitute an ENTH domain; sequence LDRLAFLQQL…FSESIPSPSH (134 aa). Disordered stretches follow at residues 131-157, 214-290, and 472-491; these read PSPS…APAL, AIPS…ESLD, and PNGA…SDPA. Composition is skewed to low complexity over residues 144-154 and 266-281; these read QSGMGSQASSA and SRSS…DGQS. Over residues 472–485 the composition is skewed to polar residues; that stretch reads PNGAANQKNPNGST.

It is found in the golgi apparatus. Its subcellular location is the trans-Golgi network membrane. The protein localises to the cytoplasmic vesicle. It localises to the cytoplasm. The protein resides in the cytosol. In terms of biological role, may play a role in vesicular trafficking of proteins at the trans-Golgi network. This chain is AP-4 complex accessory subunit tepsin, found in Xenopus laevis (African clawed frog).